The sequence spans 513 residues: 2,3-bisphosphoglycerate-independent phosphoglycerate mutase (513 aa).

Mn(2+) is bound by residues Asp-15 and Ser-65. Catalysis depends on Ser-65, which acts as the Phosphoserine intermediate. Residues His-126, 156–157 (RD), Arg-188, Arg-194, 263–266 (RADR), and Lys-337 contribute to the substrate site. Asp-402, His-406, Asp-443, His-444, and His-461 together coordinate Mn(2+).

This sequence belongs to the BPG-independent phosphoglycerate mutase family. In terms of assembly, monomer. Mn(2+) serves as cofactor.

The catalysed reaction is (2R)-2-phosphoglycerate = (2R)-3-phosphoglycerate. Its pathway is carbohydrate degradation; glycolysis; pyruvate from D-glyceraldehyde 3-phosphate: step 3/5. In terms of biological role, catalyzes the interconversion of 2-phosphoglycerate and 3-phosphoglycerate. The chain is 2,3-bisphosphoglycerate-independent phosphoglycerate mutase from Moorella thermoacetica (strain ATCC 39073 / JCM 9320).